The chain runs to 843 residues: Protein translocase subunit SecA 1 (843 aa).

Residues Q91, 109-113 (GEGKT), and D498 contribute to the ATP site. Residues 799–813 (EAKHVSAEDGKEKVK) are compositionally biased toward basic and acidic residues. The disordered stretch occupies residues 799 to 826 (EAKHVSAEDGKEKVKPKPIVKGDQVGRN). Zn(2+) is bound by residues C829, C831, C840, and H841.

The protein belongs to the SecA family. As to quaternary structure, monomer and homodimer. Part of the essential Sec protein translocation apparatus which comprises SecA, SecYEG and auxiliary proteins SecDF. Other proteins may also be involved. The cofactor is Zn(2+).

It localises to the cell membrane. The protein resides in the cytoplasm. It carries out the reaction ATP + H2O + cellular proteinSide 1 = ADP + phosphate + cellular proteinSide 2.. In terms of biological role, part of the Sec protein translocase complex. Interacts with the SecYEG preprotein conducting channel. Has a central role in coupling the hydrolysis of ATP to the transfer of proteins into and across the cell membrane, serving as an ATP-driven molecular motor driving the stepwise translocation of polypeptide chains across the membrane. This is Protein translocase subunit SecA 1 from Staphylococcus aureus (strain N315).